The primary structure comprises 802 residues: Ribosomal protein S6 kinase alpha-5 (802 aa).

A compositionally biased stretch (gly residues) spans 1 to 22; that stretch reads MEEEGGSSGGAAGTSADGGDGG. Positions 1 to 23 are disordered; it reads MEEEGGSSGGAAGTSADGGDGGE. Residues 49 to 318 form the Protein kinase 1 domain; the sequence is FELLKVLGTG…ADEIKEHLFF (270 aa). ATP-binding positions include 55 to 63 and K81; that span reads LGTGAYGKV. D177 serves as the catalytic Proton acceptor. S212 is modified (phosphoserine; by autocatalysis). The 69-residue stretch at 319-387 folds into the AGC-kinase C-terminal domain; that stretch reads QKINWDDLAA…VAPSILFKRN (69 aa). The residue at position 360 (S360) is a Phosphoserine; by MAPK1, MAPK3 and MAPK14. Phosphoserine; by autocatalysis is present on residues S376 and S381. The Protein kinase 2 domain maps to 426 to 687; the sequence is DLKDKPLGEG…MSGLRYNEWL (262 aa). Residues 432–440 and K455 each bind ATP; that span reads LGEGSFSIC. The active-site Proton acceptor is the D544. The residue at position 581 (T581) is a Phosphothreonine; by MAPK1, MAPK3 and MAPK14. Residues S647, S657, S691, and S695 each carry the phosphoserine modification. T700 bears the Phosphothreonine; by MAPK1, MAPK3 and MAPK14 mark. The segment at 741–802 is disordered; that stretch reads AKRRKMKKTS…TLFQFSDSVA (62 aa). The span at 749 to 779 shows a compositional bias: low complexity; sequence TSTSTETRSSSSESSHSSSSHSHGKTTPTKT. Phosphoserine; by autocatalysis is present on residues S750, S752, and S758. Over residues 780 to 802 the composition is skewed to polar residues; it reads LQPSNPADSNNPETLFQFSDSVA. Phosphoserine is present on S798.

This sequence belongs to the protein kinase superfamily. AGC Ser/Thr protein kinase family. S6 kinase subfamily. In terms of assembly, forms a complex with either MAPK1/ERK2 or MAPK3/ERK1 in quiescent cells which transiently dissociates following mitogenic stimulation. Also associates with MAPK14/p38-alpha. Activated RPS6KA5 associates with and phosphorylates the NF-kappa-B p65 subunit RELA. Interacts with CREBBP and EP300. It depends on Mg(2+) as a cofactor. Ser-376 and Thr-581 phosphorylation is required for kinase activity. Ser-376 and Ser-212 are autophosphorylated by the C-terminal kinase domain, and their phosphorylation is essential for the catalytic activity of the N-terminal kinase domain. Phosphorylated at Ser-360, Thr-581 and Thr-700 by MAPK1/ERK2, MAPK3/ERK1 and MAPK14/p38-alpha. Autophosphorylated at Ser-750, Ser-752 and Ser-758 by the N-terminal kinase domain. In terms of processing, ubiquitinated.

It is found in the nucleus. It carries out the reaction L-seryl-[protein] + ATP = O-phospho-L-seryl-[protein] + ADP + H(+). The enzyme catalyses L-threonyl-[protein] + ATP = O-phospho-L-threonyl-[protein] + ADP + H(+). Activated by phosphorylation at Ser-360, Thr-581 and Thr-700 by MAPK1/ERK2, MAPK3/ERK1 and MAPK14/p38-alpha, and by further autophosphorylation of Ser-212, Ser-376 and Ser-381 by the activated C-terminal kinase domain. The active N-terminal kinase domain finally phosphorylates downstream substrates, as well as Ser-750, Ser-752 and Ser-758 in its own C-terminal region. Its function is as follows. Serine/threonine-protein kinase that is required for the mitogen or stress-induced phosphorylation of the transcription factors CREB1 and ATF1 and for the regulation of the transcription factors RELA, STAT3 and ETV1/ER81, and that contributes to gene activation by histone phosphorylation and functions in the regulation of inflammatory genes. Phosphorylates CREB1 and ATF1 in response to mitogenic or stress stimuli such as UV-C irradiation, epidermal growth factor (EGF) and anisomycin. Plays an essential role in the control of RELA transcriptional activity in response to TNF and upon glucocorticoid, associates in the cytoplasm with the glucocorticoid receptor NR3C1 and contributes to RELA inhibition and repression of inflammatory gene expression. In skeletal myoblasts is required for phosphorylation of RELA at 'Ser-276' during oxidative stress. In erythropoietin-stimulated cells, is necessary for the 'Ser-727' phosphorylation of STAT3 and regulation of its transcriptional potential. Phosphorylates ETV1/ER81 at 'Ser-191' and 'Ser-216', and thereby regulates its ability to stimulate transcription, which may be important during development and breast tumor formation. Directly represses transcription via phosphorylation of 'Ser-1' of histone H2A. Phosphorylates 'Ser-10' of histone H3 in response to mitogenics, stress stimuli and EGF, which results in the transcriptional activation of several immediate early genes, including proto-oncogenes c-fos/FOS and c-jun/JUN. May also phosphorylate 'Ser-28' of histone H3. Mediates the mitogen- and stress-induced phosphorylation of high mobility group protein 1 (HMGN1/HMG14). In lipopolysaccharide-stimulated primary macrophages, acts downstream of the Toll-like receptor TLR4 to limit the production of pro-inflammatory cytokines. Functions probably by inducing transcription of the MAP kinase phosphatase DUSP1 and the anti-inflammatory cytokine interleukin 10 (IL10), via CREB1 and ATF1 transcription factors. Plays a role in neuronal cell death by mediating the downstream effects of excitotoxic injury. Phosphorylates TRIM7 at 'Ser-107' in response to growth factor signaling via the MEK/ERK pathway, thereby stimulating its ubiquitin ligase activity. The polypeptide is Ribosomal protein S6 kinase alpha-5 (RPS6KA5) (Pongo abelii (Sumatran orangutan)).